The sequence spans 63 residues: Metallothionein-like protein type 3 (63 aa).

The protein belongs to the metallothionein superfamily. Type 15 family.

Metallothioneins have a high content of cysteine residues that bind various heavy metals. This Actinidia deliciosa (Kiwi) protein is Metallothionein-like protein type 3.